Consider the following 1496-residue polypeptide: DENN domain-containing protein 4B (1496 aa).

Residues 44–203 form the MABP domain; that stretch reads AEPITDVAVI…AVYLCYKVGL (160 aa). In terms of domain architecture, uDENN spans 195-369; the sequence is VYLCYKVGLA…NVPFPSPQRP (175 aa). The 137-residue stretch at 390 to 526 folds into the cDENN domain; sequence PLPLSGASFL…PYKVLLATLT (137 aa). Residues 528–644 form the dDENN domain; that stretch reads LYQQLDQTYT…ECSFGSARHA (117 aa). The tract at residues 720–744 is disordered; that stretch reads QPGALPVPGPSRSAPSSPAPRRTKQ. Over residues 729-739 the composition is skewed to low complexity; the sequence is PSRSAPSSPAP. 2 PPR repeats span residues 775 to 811 and 812 to 846; these read WFLC…VVLP and DEVC…GIVP. 4 disordered regions span residues 891 to 970, 995 to 1055, 1067 to 1119, and 1205 to 1227; these read LRER…ARGA, VPWH…TPRR, PSRH…GSEW, and SRPS…PVPG. Residues 896–912 are compositionally biased toward low complexity; the sequence is QQQQQQQQQQQQQQQEQ. 2 stretches are compositionally biased toward polar residues: residues 913-924 and 935-944; these read VSAHQEAGSSQA and RPLQRQTTWA. Ser-953 is subject to Phosphoserine. The span at 1075-1090 shows a compositional bias: pro residues; sequence RIPPPELPPDLPPPAR. At Ser-1092 the chain carries Phosphoserine. The segment covering 1105-1119 has biased composition (low complexity); the sequence is GSTASESSASLGSEW.

Its subcellular location is the golgi apparatus. Its function is as follows. Guanine nucleotide exchange factor (GEF) which may activate RAB10. Promotes the exchange of GDP to GTP, converting inactive GDP-bound Rab proteins into their active GTP-bound form. This chain is DENN domain-containing protein 4B (DENND4B), found in Homo sapiens (Human).